The following is a 435-amino-acid chain: ATP-dependent protease ATPase subunit HslU (435 aa).

Residues Ile-18, 60-65 (GVGKTE), Asp-248, Glu-313, and Arg-385 each bind ATP.

The protein belongs to the ClpX chaperone family. HslU subfamily. A double ring-shaped homohexamer of HslV is capped on each side by a ring-shaped HslU homohexamer. The assembly of the HslU/HslV complex is dependent on binding of ATP.

Its subcellular location is the cytoplasm. ATPase subunit of a proteasome-like degradation complex; this subunit has chaperone activity. The binding of ATP and its subsequent hydrolysis by HslU are essential for unfolding of protein substrates subsequently hydrolyzed by HslV. HslU recognizes the N-terminal part of its protein substrates and unfolds these before they are guided to HslV for hydrolysis. This is ATP-dependent protease ATPase subunit HslU from Sinorhizobium medicae (strain WSM419) (Ensifer medicae).